A 123-amino-acid polypeptide reads, in one-letter code: Small ribosomal subunit protein uS12 (123 aa).

The interval 1 to 32 is disordered; it reads MPTINQLIRKPREAQKARDKAPALQSSPQKRG. A compositionally biased stretch (basic and acidic residues) spans 10-21; sequence KPREAQKARDKA. The residue at position 89 (Asp-89) is a 3-methylthioaspartic acid.

It belongs to the universal ribosomal protein uS12 family. In terms of assembly, part of the 30S ribosomal subunit. Contacts proteins S8 and S17. May interact with IF1 in the 30S initiation complex.

Its function is as follows. With S4 and S5 plays an important role in translational accuracy. Interacts with and stabilizes bases of the 16S rRNA that are involved in tRNA selection in the A site and with the mRNA backbone. Located at the interface of the 30S and 50S subunits, it traverses the body of the 30S subunit contacting proteins on the other side and probably holding the rRNA structure together. The combined cluster of proteins S8, S12 and S17 appears to hold together the shoulder and platform of the 30S subunit. The chain is Small ribosomal subunit protein uS12 from Azorhizobium caulinodans (strain ATCC 43989 / DSM 5975 / JCM 20966 / LMG 6465 / NBRC 14845 / NCIMB 13405 / ORS 571).